A 616-amino-acid polypeptide reads, in one-letter code: Coagulation factor XII (616 aa).

The first 19 residues, Met1–Leu19, serve as a signal peptide directing secretion. The 49-residue stretch at Val42–Glu90 folds into the Fibronectin type-II domain. Disulfide bonds link Cys47–Cys73, Cys61–Cys88, Cys98–Cys110, Cys104–Cys119, Cys121–Cys130, Cys135–Cys163, Cys161–Cys170, Cys178–Cys189, Cys183–Cys198, Cys200–Cys209, Cys217–Cys295, Cys238–Cys277, and Cys266–Cys290. In terms of domain architecture, EGF-like 1 spans Val94–Gln131. Thr109 carries O-linked (Fuc) threonine glycosylation. Positions Glu133–Val173 constitute a Fibronectin type-I domain. One can recognise an EGF-like 2 domain in the interval Ala174–Asp210. The Kringle domain maps to Arg216–Cys295. Residues Asn249, Asn271, and Asn335 are each glycosylated (N-linked (GlcNAc...) asparagine). The segment at Pro303–Ala342 is disordered. Positions Pro325–Ser338 are enriched in polar residues. Intrachain disulfides connect Cys358–Cys485, Cys396–Cys412, Cys404–Cys474, Cys435–Cys438, Cys501–Cys570, Cys533–Cys549, and Cys560–Cys591. Residues Ile372 to Thr615 enclose the Peptidase S1 domain. The active-site Charge relay system is His411. The N-linked (GlcNAc...) asparagine glycan is linked to Asn432. Catalysis depends on Asp460, which acts as the Charge relay system. Residue Ser564 is the Charge relay system of the active site.

It belongs to the peptidase S1 family. Interacts with HRG; the interaction, which is enhanced in the presence of zinc ions and inhibited by heparin-binding, inhibits factor XII autoactivation and contact-initiated coagulation. O- and N-glycosylated.

It localises to the secreted. The enzyme catalyses Selective cleavage of Arg-|-Ile bonds in factor VII to form factor VIIa and factor XI to form factor XIa.. Activity is promoted in the presence of negatively charged surfaces. Functionally, factor XII is a serum glycoprotein that participates in the initiation of blood coagulation, fibrinolysis, and the generation of bradykinin and angiotensin. Prekallikrein is cleaved by factor XII to form kallikrein, which then cleaves factor XII first to alpha-factor XIIa and then trypsin cleaves it to beta-factor XIIa. Alpha-factor XIIa activates factor XI to factor XIa. The chain is Coagulation factor XII (F12) from Sus scrofa (Pig).